The chain runs to 382 residues: uncharacterized protein (382 aa).

10 helical membrane-spanning segments follow: residues 8 to 28, 41 to 61, 73 to 93, 94 to 114, 133 to 153, 157 to 177, 208 to 228, 274 to 294, 325 to 345, and 349 to 369; these read VLLL…LNTL, WQVG…TLIA, SYHC…LTVD, FWSW…IWVI, AAYM…LGIV, LLSV…PLLF, GCII…LYLS, VVIL…ALFI, ALLM…SLLM, and SDNL…MMLL.

It belongs to the major facilitator superfamily. YcaD (TC 2.A.1.26) family.

It localises to the cell inner membrane. This is an uncharacterized protein from Yersinia pseudotuberculosis serotype O:3 (strain YPIII).